Here is a 248-residue protein sequence, read N- to C-terminus: DNA repair protein RecO (248 aa).

This sequence belongs to the RecO family.

Its function is as follows. Involved in DNA repair and RecF pathway recombination. The polypeptide is DNA repair protein RecO (Bradyrhizobium sp. (strain ORS 278)).